Reading from the N-terminus, the 134-residue chain is MTLNLCVLTPNRIIWDSEVKEIILSTNSGQIGVLPNHAPIATAVDIGILKIRLQEQWLTMALMGGFARIGNNEITILVNDAEKGSDIDPQEAQQTLEIAEANLSRAEGKRQTIEANLALRRARTRVEAINAISS.

Belongs to the ATPase epsilon chain family. As to quaternary structure, F-type ATPases have 2 components, CF(1) - the catalytic core - and CF(0) - the membrane proton channel. CF(1) has five subunits: alpha(3), beta(3), gamma(1), delta(1), epsilon(1). CF(0) has three main subunits: a, b and c.

The protein localises to the plastid. It is found in the chloroplast thylakoid membrane. Its function is as follows. Produces ATP from ADP in the presence of a proton gradient across the membrane. This is ATP synthase epsilon chain, chloroplastic from Amborella trichopoda.